Consider the following 589-residue polypeptide: WD repeat-containing protein 26 homolog (589 aa).

A disordered region spans residues 1–57; sequence MGVVEDTEPPLKRAKRLADEPNGFSANSSVRGSSVNSNSLGDLMARPLPSQGDDETI. Residues 25 to 39 are compositionally biased toward low complexity; that stretch reads SANSSVRGSSVNSNS. The 33-residue stretch at 64–96 folds into the LisH domain; the sequence is RKSEFVRIITRALYSLGYDKTGAMLEEESGISL. The region spanning 97-154 is the CTLH domain; it reads HNSTIKLFLQQVKDGKWDQSVKTLHRIGFPDEKAVKAASFLLLEQKFLEFLKVEKIAD. 7 WD repeats span residues 272–311, 317–358, 360–398, 401–440, 442–480, 484–526, and 529–569; these read SHTD…HISL, GHHK…HMYE, GGIS…KECW, QRTQ…ERLI, EEDM…KIVS, GHKR…LIVE, and GHAG…QQNQ.

In terms of assembly, interacts with RANBPM. Expressed in roots, leaves and flowers.

It is found in the cytoplasm. Its function is as follows. Acts as a component involved in the crosstalk regulation between light, hormone and abiotic stress response. This chain is WD repeat-containing protein 26 homolog, found in Arabidopsis thaliana (Mouse-ear cress).